A 443-amino-acid polypeptide reads, in one-letter code: Chromosomal replication initiator protein DnaA (443 aa).

A domain I, interacts with DnaA modulators region spans residues 1–67 (MDAWSRSLER…RELLAHFAGF (67 aa)). The domain II stretch occupies residues 67–105 (FSDVFLEIGSRPRPVEAQNAPFSTPSAHVSSEPQVPFAG). The domain III, AAA+ region stretch occupies residues 106 to 323 (NLDNHYTFAN…GALNTLTARA (218 aa)). Residues Gly151, Gly153, Lys154, and Thr155 each contribute to the ATP site. The tract at residues 324-443 (NFTGRAITTE…WDKLIRKLSE (120 aa)) is domain IV, binds dsDNA.

The protein belongs to the DnaA family. In terms of assembly, oligomerizes as a right-handed, spiral filament on DNA at oriC.

It is found in the cytoplasm. In terms of biological role, plays an essential role in the initiation and regulation of chromosomal replication. ATP-DnaA binds to the origin of replication (oriC) to initiate formation of the DNA replication initiation complex once per cell cycle. Binds the DnaA box (a 9 base pair repeat at the origin) and separates the double-stranded (ds)DNA. Forms a right-handed helical filament on oriC DNA; dsDNA binds to the exterior of the filament while single-stranded (ss)DNA is stabiized in the filament's interior. The ATP-DnaA-oriC complex binds and stabilizes one strand of the AT-rich DNA unwinding element (DUE), permitting loading of DNA polymerase. After initiation quickly degrades to an ADP-DnaA complex that is not apt for DNA replication. Binds acidic phospholipids. The sequence is that of Chromosomal replication initiator protein DnaA from Stenotrophomonas maltophilia (strain R551-3).